The primary structure comprises 518 residues: Trigger factor (518 aa).

Residues 170–255 enclose the PPIase FKBP-type domain; it reads GDVVVIDFVG…VKGLESPQEA (86 aa). Residues 447-518 are disordered; sequence EAPAKPAKKA…AKKAAAKKDA (72 aa). Composition is skewed to basic residues over residues 452-468 and 501-518; these read PAKK…KKAA and PAAK…KKDA.

It belongs to the FKBP-type PPIase family. Tig subfamily.

It localises to the cytoplasm. It catalyses the reaction [protein]-peptidylproline (omega=180) = [protein]-peptidylproline (omega=0). Functionally, involved in protein export. Acts as a chaperone by maintaining the newly synthesized protein in an open conformation. Functions as a peptidyl-prolyl cis-trans isomerase. This chain is Trigger factor, found in Maricaulis maris (strain MCS10) (Caulobacter maris).